The following is a 333-amino-acid chain: D-alanine--D-alanine ligase (333 aa).

In terms of domain architecture, ATP-grasp spans 124–329 (KMWFSALGIP…FTEYLYSNIK (206 aa)). 154–209 (ALETWGSVFIKAASQGSSVGCYRVDSIDELASSLKEAFSYSPYVVVEKTIHARELE) is a binding site for ATP. Mg(2+)-binding residues include D283, E296, and N298.

The protein belongs to the D-alanine--D-alanine ligase family. Requires Mg(2+) as cofactor. The cofactor is Mn(2+).

The protein resides in the cytoplasm. The catalysed reaction is 2 D-alanine + ATP = D-alanyl-D-alanine + ADP + phosphate + H(+). It participates in cell wall biogenesis; peptidoglycan biosynthesis. Its function is as follows. Cell wall formation. This Shewanella sediminis (strain HAW-EB3) protein is D-alanine--D-alanine ligase.